The following is a 102-amino-acid chain: Large ribosomal subunit protein bL21 (102 aa).

This sequence belongs to the bacterial ribosomal protein bL21 family. As to quaternary structure, part of the 50S ribosomal subunit. Contacts protein L20.

Functionally, this protein binds to 23S rRNA in the presence of protein L20. This is Large ribosomal subunit protein bL21 from Listeria innocua serovar 6a (strain ATCC BAA-680 / CLIP 11262).